The sequence spans 160 residues: UPF0262 protein Oant_0325 (160 aa).

It belongs to the UPF0262 family.

The sequence is that of UPF0262 protein Oant_0325 from Brucella anthropi (strain ATCC 49188 / DSM 6882 / CCUG 24695 / JCM 21032 / LMG 3331 / NBRC 15819 / NCTC 12168 / Alc 37) (Ochrobactrum anthropi).